The following is a 279-amino-acid chain: MAFQGTSRTLTQQSSADTSDDLQKILFSPEAIKKMATECDLGRHHWMRADNAISVRPLVPEVTHGRIASFFKSGYDVGELCSKGYMSVPQVLCAVTRTVSTDAEGSLRIYLADLGDKELSPIDGQCVSLHNHDLPALVSFQPTYDCPMETVGNRKRCFAVVIERHGYIGYTGTTASVCSNWQARFSSKNNNYTHIAAGKTLVLPFNRLAEQTKPSAVARLLKSQLNNIESSQYLLTNVKINQNARSESEELNVESPPAAIGSSSASRSEAFRPQVVNGL.

Residues E247–L279 form a disordered region. Residues E254–S268 are compositionally biased toward low complexity.

Belongs to the cucumovirus movement protein family.

Its subcellular location is the host cell junction. It is found in the host plasmodesma. In terms of biological role, transports viral genome to neighboring plant cells directly through plasmosdesmata, without any budding. The movement protein allows efficient cell to cell propagation, by bypassing the host cell wall barrier. Acts by forming a tubular structure at the host plasmodesmata, enlarging it enough to allow free passage of virion capsids. The sequence is that of Movement protein from Cucumis sativus (Cucumber).